Consider the following 217-residue polypeptide: Ras-like protein (217 aa).

17 to 24 (GGGGVGKS) contacts GTP. An Effector region motif is present at residues 39–47 (YDPTIEDSY). Residues 64–68 (DTAGQ) and 123–126 (NKCD) contribute to the GTP site. A disordered region spans residues 181 to 200 (TGRMMTGGGGGGPPGTYAGK). A compositionally biased stretch (gly residues) spans 185-194 (MTGGGGGGPP). S-palmitoyl cysteine attachment occurs at residues C210 and C211. C214 is subject to Cysteine methyl ester. C214 carries the S-geranylgeranyl cysteine lipid modification. A propeptide spans 215 to 217 (VVL) (removed in mature form).

This sequence belongs to the small GTPase superfamily. Ras family.

Its subcellular location is the cell membrane. It catalyses the reaction GTP + H2O = GDP + phosphate + H(+). Its activity is regulated as follows. Alternates between an inactive form bound to GDP and an active form bound to GTP. Activated by a guanine nucleotide-exchange factor (GEF) and inactivated by a GTPase-activating protein (GAP). In Lentinula edodes (Shiitake mushroom), this protein is Ras-like protein.